A 278-amino-acid chain; its full sequence is Large ribosomal subunit protein uL2 (278 aa).

The tract at residues 218-278 (RPHNRGVVMN…IMRSRHQRKK (61 aa)) is disordered.

The protein belongs to the universal ribosomal protein uL2 family. As to quaternary structure, part of the 50S ribosomal subunit. Forms a bridge to the 30S subunit in the 70S ribosome.

Its function is as follows. One of the primary rRNA binding proteins. Required for association of the 30S and 50S subunits to form the 70S ribosome, for tRNA binding and peptide bond formation. It has been suggested to have peptidyltransferase activity; this is somewhat controversial. Makes several contacts with the 16S rRNA in the 70S ribosome. This is Large ribosomal subunit protein uL2 from Rhizobium etli (strain CIAT 652).